Reading from the N-terminus, the 188-residue chain is Large ribosomal subunit protein bL35m (188 aa).

It belongs to the bacterial ribosomal protein bL35 family.

The protein localises to the mitochondrion. The protein is Large ribosomal subunit protein bL35m (MRPL35) of Bos taurus (Bovine).